The following is a 285-amino-acid chain: Pantothenate synthetase (285 aa).

30-37 (MGYLHEGH) provides a ligand contact to ATP. His-37 (proton donor) is an active-site residue. Gln-61 is a (R)-pantoate binding site. Beta-alanine is bound at residue Gln-61. An ATP-binding site is contributed by 148–151 (GKKD). Gln-154 contributes to the (R)-pantoate binding site. ATP is bound by residues Ile-177 and 185 to 188 (LSSR).

The protein belongs to the pantothenate synthetase family. As to quaternary structure, homodimer.

It localises to the cytoplasm. The catalysed reaction is (R)-pantoate + beta-alanine + ATP = (R)-pantothenate + AMP + diphosphate + H(+). The protein operates within cofactor biosynthesis; (R)-pantothenate biosynthesis; (R)-pantothenate from (R)-pantoate and beta-alanine: step 1/1. Catalyzes the condensation of pantoate with beta-alanine in an ATP-dependent reaction via a pantoyl-adenylate intermediate. In Leptospira borgpetersenii serovar Hardjo-bovis (strain JB197), this protein is Pantothenate synthetase.